A 76-amino-acid chain; its full sequence is Omega-conotoxin-like TxO2 (76 aa).

The first 22 residues, Met-1–Ala-22, serve as a signal peptide directing secretion. Residues Ala-23–Arg-52 constitute a propeptide that is removed on maturation. 3 cysteine pairs are disulfide-bonded: Cys-53-Cys-67, Cys-60-Cys-71, and Cys-66-Cys-75.

The protein belongs to the conotoxin O1 superfamily. In terms of tissue distribution, expressed by the venom duct.

It is found in the secreted. Functionally, omega-conotoxins act at presynaptic membranes, they bind and block voltage-gated calcium channels (Cav). The polypeptide is Omega-conotoxin-like TxO2 (Conus textile (Cloth-of-gold cone)).